The following is a 758-amino-acid chain: MKLHSSSKIQNHAWLSDARMNNPSETSKSPESGDGNTGTQTNGLDFQKQAVPIGAITSAQAQALLGHLHQVQLAGTSLQAAAHSLNVQTKFKEEPGEPMQVVQPSQQPSLQAAIPQTQLMVAGGQIAGLTLTPAQQQMLLQQAQAQLLAAAVQHSASQQHNAAGATISASAATPMTQIPLSQPIQIAQDLQQLQQLQQQNLNLQQYVLVHPTTNLQSAQFIISQTPQGQQGLLQAQNLLTQLPQQSQANLLQSQPSITLTSQPATPTRTIAATPVQQLPQSQTTPKRIDTPSLEEPSDLEELEQFAKTFKQRRIKLGFTQGDVGLAMGKLYGNDFSQTTISRFEALNLSFKNMCKLKPLLEKWLNDAENITSDSTLTNQSVLNSPGHGMEGLNRRRKKRTSIETNIRVALEKSFLENQKPTSEEITMIADQLNMEKEVIRVWFCNRRQKEKRINPPSSGGSSSSPIKSLFSSPNPLVASTPSLVTSSPATTLTVNPVLPLTSAAAITSFHIPGTTGTSSANTATVISTAPPVSSVLTSPSLSSSPSATAASSEASTAGETSTTQTTSTPMTSSLNTGQVMVTASGIHTAAATALQGAAQLPTNASLAAMAAAAGLNPGLMAPSQFAAGGALFSLNPGALGSALSPALMSNSTLATIQALASSGSLPITSLDAAGNLVFANAGGTPNIVTAPLFLNPQNLSLFTSNPVSLISAASAGATGPITSLHATTSSIDSIQNALFTMASASGAASTTTSASKAQ.

3 stretches are compositionally biased toward polar residues: residues 1–10 (MKLHSSSKIQ), 19–30 (RMNNPSETSKSP), and 275–285 (VQQLPQSQTTP). Disordered regions lie at residues 1–43 (MKLH…QTNG), 271–296 (AATPVQQLPQSQTTPKRIDTPSLEEP), 377–398 (TNQSVLNSPGHGMEGLNRRRKK), 450–472 (EKRINPPSSGGSSSSPIKSLFSS), and 534–573 (SVLTSPSLSSSPSATAASSEASTAGETSTTQTTSTPMTSS). In terms of domain architecture, POU-specific spans 294 to 368 (EEPSDLEELE…LLEKWLNDAE (75 aa)). The segment at residues 395-454 (RRKKRTSIETNIRVALEKSFLENQKPTSEEITMIADQLNMEKEVIRVWFCNRRQKEKRIN) is a DNA-binding region (homeobox). The span at 455-472 (PPSSGGSSSSPIKSLFSS) shows a compositional bias: low complexity.

The protein belongs to the POU transcription factor family. Class-2 subfamily. In terms of tissue distribution, expressed in oocytes (at protein level). Expressed in the tadpole brain (at protein level).

Its subcellular location is the cytoplasm. It is found in the nucleus. Functionally, transcription factor that binds to the octamer motif (5'-ATTTGCAT-3') and activates the promoters of the genes of some small nuclear RNAs (snRNA) and histone H2B. In vitro does not bind to variant octamer sequences, such as the H2B octamer 5'-GTTTGCAT-3', although binding has been observed in vivo during early embryogenesis, suggesting that interactions between pou2f1 and other factors might be required for octamer-dependent H2B transcription. Acts downstream of Notch signaling during radial glia formation. May be important for gastrulation, possibly through the regulation of an FGF-type signaling pathway. The polypeptide is POU domain, class 2, transcription factor 1 (pou2f1) (Xenopus laevis (African clawed frog)).